A 327-amino-acid polypeptide reads, in one-letter code: Elongation factor P--(R)-beta-lysine ligase (327 aa).

Residue 80–82 participates in substrate binding; the sequence is SPE. ATP is bound by residues 104–106 and Asn-113; that span reads RNE. Tyr-122 is a substrate binding site. Residue 246–247 participates in ATP binding; the sequence is EL. Position 253 (Glu-253) interacts with substrate. Position 302 (Gly-302) interacts with ATP.

This sequence belongs to the class-II aminoacyl-tRNA synthetase family. EpmA subfamily. As to quaternary structure, homodimer.

The enzyme catalyses D-beta-lysine + L-lysyl-[protein] + ATP = N(6)-((3R)-3,6-diaminohexanoyl)-L-lysyl-[protein] + AMP + diphosphate + H(+). With EpmB is involved in the beta-lysylation step of the post-translational modification of translation elongation factor P (EF-P). Catalyzes the ATP-dependent activation of (R)-beta-lysine produced by EpmB, forming a lysyl-adenylate, from which the beta-lysyl moiety is then transferred to the epsilon-amino group of a conserved specific lysine residue in EF-P. This is Elongation factor P--(R)-beta-lysine ligase from Haemophilus ducreyi (strain 35000HP / ATCC 700724).